We begin with the raw amino-acid sequence, 164 residues long: UPF0262 protein Saro_0143 (164 aa).

Belongs to the UPF0262 family.

The chain is UPF0262 protein Saro_0143 from Novosphingobium aromaticivorans (strain ATCC 700278 / DSM 12444 / CCUG 56034 / CIP 105152 / NBRC 16084 / F199).